A 271-amino-acid chain; its full sequence is 3-methyl-2-oxobutanoate hydroxymethyltransferase (271 aa).

The Mg(2+) site is built by aspartate 53 and aspartate 92. 3-methyl-2-oxobutanoate-binding positions include 53 to 54 (DS), aspartate 92, and lysine 120. Glutamate 122 contributes to the Mg(2+) binding site. Glutamate 189 (proton acceptor) is an active-site residue.

The protein belongs to the PanB family. Homodecamer; pentamer of dimers. Mg(2+) is required as a cofactor.

The protein resides in the cytoplasm. It carries out the reaction 3-methyl-2-oxobutanoate + (6R)-5,10-methylene-5,6,7,8-tetrahydrofolate + H2O = 2-dehydropantoate + (6S)-5,6,7,8-tetrahydrofolate. Its pathway is cofactor biosynthesis; (R)-pantothenate biosynthesis; (R)-pantoate from 3-methyl-2-oxobutanoate: step 1/2. In terms of biological role, catalyzes the reversible reaction in which hydroxymethyl group from 5,10-methylenetetrahydrofolate is transferred onto alpha-ketoisovalerate to form ketopantoate. The polypeptide is 3-methyl-2-oxobutanoate hydroxymethyltransferase (Paraburkholderia xenovorans (strain LB400)).